A 354-amino-acid chain; its full sequence is Peptide chain release factor 1 (354 aa).

N5-methylglutamine is present on Q232.

This sequence belongs to the prokaryotic/mitochondrial release factor family. In terms of processing, methylated by PrmC. Methylation increases the termination efficiency of RF1.

The protein localises to the cytoplasm. Functionally, peptide chain release factor 1 directs the termination of translation in response to the peptide chain termination codons UAG and UAA. The chain is Peptide chain release factor 1 from Jannaschia sp. (strain CCS1).